The following is a 101-amino-acid chain: uncharacterized protein (101 aa).

A signal peptide spans 1–17 (MKKAAVLAVVLSLGLAG). Residue cysteine 18 is the site of N-palmitoyl cysteine attachment. A lipid anchor (S-diacylglycerol cysteine) is attached at cysteine 18.

The protein localises to the cell membrane. This is an uncharacterized protein from Pasteurella multocida (strain Pm70).